Here is a 251-residue protein sequence, read N- to C-terminus: Aquaporin (251 aa).

The Cytoplasmic segment spans residues 1–11 (MAGETLRKIQS). The helical transmembrane segment at 12–32 (LLGEMVASFIFGFAVYSAILG) threads the bilayer. Residues 33 to 42 (STIAQQPAAK) are Extracellular-facing. The helical transmembrane segment at 43–63 (VIIGLTVGFSAIGIIYSFSDV) threads the bilayer. Residues 64–86 (TIAHFNPAITLAAILTGKMGILC) are Cytoplasmic-facing. Positions 69-71 (NPA) match the NPA motif. The helical transmembrane segment at 87 to 107 (GLGYMLAQCVGFILAVCALLV) threads the bilayer. Topologically, residues 108–133 (CSPVGYKETLNVIRPAPAPFGADNLN) are extracellular. Residues 134–154 (VFFTEFFLTAILVHIAFAVAV) form a helical membrane-spanning segment. Residues 155–179 (NPYRPKVDTDGKFVDPDEKEPVDRR) lie on the Cytoplasmic side of the membrane. A helical membrane pass occupies residues 180–200 (ITAPLCIGLTLGFLAFMGLVT). The Extracellular segment spans residues 201–224 (SGGAFNPGLTLAPVIMSNTWQHFW). An NPG motif is present at residues 206 to 208 (NPG). A helical membrane pass occupies residues 225 to 245 (LYLGAQYLGGLVGGLLQVFVL). Residues 246–251 (YKLSSN) are Cytoplasmic-facing.

It belongs to the MIP/aquaporin (TC 1.A.8) family.

The protein resides in the cell membrane. In terms of biological role, water channel required to facilitate the transport of water across membranes. Involved in osmotolerance. The chain is Aquaporin (AQP) from Encephalitozoon hellem (Microsporidian parasite).